A 74-amino-acid polypeptide reads, in one-letter code: Acyl carrier protein (74 aa).

Positions 1–73 constitute a Carrier domain; the sequence is MAVFEKVQEI…DLVAYVEEKT (73 aa). The residue at position 35 (S35) is an O-(pantetheine 4'-phosphoryl)serine.

Belongs to the acyl carrier protein (ACP) family. In terms of processing, 4'-phosphopantetheine is transferred from CoA to a specific serine of apo-ACP by AcpS. This modification is essential for activity because fatty acids are bound in thioester linkage to the sulfhydryl of the prosthetic group.

It is found in the cytoplasm. Its pathway is lipid metabolism; fatty acid biosynthesis. Its function is as follows. Carrier of the growing fatty acid chain in fatty acid biosynthesis. This is Acyl carrier protein from Streptococcus thermophilus (strain CNRZ 1066).